The following is a 340-amino-acid chain: Nucleoid-associated protein PSPA7_4451 (340 aa).

It belongs to the YejK family.

The protein resides in the cytoplasm. The protein localises to the nucleoid. This Pseudomonas paraeruginosa (strain DSM 24068 / PA7) (Pseudomonas aeruginosa (strain PA7)) protein is Nucleoid-associated protein PSPA7_4451.